The primary structure comprises 109 residues: Large ribosomal subunit protein uL23 (109 aa).

The protein belongs to the universal ribosomal protein uL23 family. In terms of assembly, part of the 50S ribosomal subunit. Contacts protein L29, and trigger factor when it is bound to the ribosome.

Its function is as follows. One of the early assembly proteins it binds 23S rRNA. One of the proteins that surrounds the polypeptide exit tunnel on the outside of the ribosome. Forms the main docking site for trigger factor binding to the ribosome. The chain is Large ribosomal subunit protein uL23 from Prosthecochloris aestuarii (strain DSM 271 / SK 413).